The sequence spans 368 residues: Terpene cyclase penA (368 aa).

6 helical membrane passes run 10–30 (IILASVAIYTKYYLSFQNGFI), 81–101 (LSLYAIAFAGSMIPMWLILLM), 118–138 (LTGLLVQGIGPGVMMCVLLAM), 192–212 (LFIASWQGWPLYIALAVGIAH), 233–253 (FALACSIISHVGLLLISFLSI), and 334–354 (LATMSLAFGPCSVALALYWTA).

Belongs to the membrane-bound ascI terpene cyclase family.

It localises to the membrane. It functions in the pathway secondary metabolite biosynthesis. Its function is as follows. Part of the gene cluster that mediates the biosynthesis of the indole diterpenes penitrems. The geranylgeranyl diphosphate (GGPP) synthase penG catalyzes the first step in penitrem biosynthesis via conversion of farnesyl pyrophosphate and isopentyl pyrophosphate into geranylgeranyl pyrophosphate (GGPP). Condensation of indole-3-glycerol phosphate with GGPP by the prenyl transferase penC then forms 3-geranylgeranylindole (3-GGI). Epoxidation by the FAD-dependent monooxygenase penM leads to a epoxidized-GGI that is substrate of the terpene cyclase penB for cyclization to yield paspaline. Paspaline is subsequently converted to 13-desoxypaxilline by the cytochrome P450 monooxygenase penP, the latter being then converted to paxilline by the cytochrome P450 monooxygenase penQ. Paxilline is converted to beta-paxitriol via C-10 ketoreduction by the short-chain dehydrogenase PC-15 which can be monoprenylated at the C-20 by the indole diterpene prenyltransferase penD. A two-step elimination (acetylation and elimination) process performed by the O-acetyltransferase PC-16 and the P.simplicissimum ptmI-ortholog not yet identified in P.crustosum, leads to the production of the prenylated form of penijanthine. The FAD-linked oxidoreductase ptmO then converts the prenylated form of penijanthine into PC-M5 which is in turn transformed into PC-M4 by the aromatic dimethylallyltransferase PC-22. A series of oxidation steps involving 4 cytochrome P450 monooxygenases (PC-21, PC-05, PC-23, PC-20) and a FAD-dependent monooxygenase (PC-14) are required for the transformation of PC-M4 to penitrems A and E. Synthesis of these final products is proposed to proceed via penitrems D and C (PC-21, PC-05, PC-14) and penitrems B and F (PC-21, PC-05, PC-14, PC-23). In Penicillium crustosum (Blue mold fungus), this protein is Terpene cyclase penA.